We begin with the raw amino-acid sequence, 121 residues long: Large ribosomal subunit protein bL21c (121 aa).

This sequence belongs to the bacterial ribosomal protein bL21 family. Part of the 50S ribosomal subunit.

Its subcellular location is the plastid. The protein localises to the chloroplast. In terms of biological role, this protein binds to 23S rRNA. This chain is Large ribosomal subunit protein bL21c, found in Huperzia lucidula (Shining clubmoss).